A 128-amino-acid chain; its full sequence is Large ribosomal subunit protein bL12 (128 aa).

Belongs to the bacterial ribosomal protein bL12 family. In terms of assembly, homodimer. Part of the ribosomal stalk of the 50S ribosomal subunit. Forms a multimeric L10(L12)X complex, where L10 forms an elongated spine to which 2 to 4 L12 dimers bind in a sequential fashion. Binds GTP-bound translation factors.

In terms of biological role, forms part of the ribosomal stalk which helps the ribosome interact with GTP-bound translation factors. Is thus essential for accurate translation. This Petrotoga mobilis (strain DSM 10674 / SJ95) protein is Large ribosomal subunit protein bL12.